The chain runs to 1199 residues: Putative pyruvate-flavodoxin oxidoreductase (1199 aa).

4Fe-4S ferredoxin-type domains follow at residues E681–Y710 and F737–L766. [4Fe-4S] cluster-binding residues include C690, C693, C696, C700, C746, C749, C752, C756, C820, C823, C848, and C1079.

The protein belongs to the pyruvate:ferredoxin/flavodoxin oxidoreductase family. It depends on [4Fe-4S] cluster as a cofactor.

It carries out the reaction oxidized [flavodoxin] + pyruvate + CoA + 2 H(+) = reduced [flavodoxin] + acetyl-CoA + CO2. In terms of biological role, oxidoreductase required for the transfer of electrons from pyruvate to flavodoxin. This Synechocystis sp. (strain ATCC 27184 / PCC 6803 / Kazusa) protein is Putative pyruvate-flavodoxin oxidoreductase (nifJ).